Reading from the N-terminus, the 114-residue chain is Nucleoid-associated protein slr1847 (114 aa).

This sequence belongs to the YbaB/EbfC family. In terms of assembly, homodimer.

It localises to the cytoplasm. The protein resides in the nucleoid. In terms of biological role, binds to DNA and alters its conformation. May be involved in regulation of gene expression, nucleoid organization and DNA protection. This chain is Nucleoid-associated protein slr1847, found in Synechocystis sp. (strain ATCC 27184 / PCC 6803 / Kazusa).